A 344-amino-acid chain; its full sequence is 17-beta-hydroxysteroid dehydrogenase type 1 (344 aa).

3 to 32 (PTVVLITGCSSGIGMHLAVRLASDRSQSFK) is an NAD(+) binding site. NADP(+) is bound by residues 10–38 (GCSS…ATLR) and D66. S135 carries the post-translational modification Phosphoserine. Position 143 (S143) interacts with substrate. Residue Y156 is the Proton acceptor of the active site. An NADP(+)-binding site is contributed by K160.

It belongs to the short-chain dehydrogenases/reductases (SDR) family. In terms of assembly, homodimer. Exists predominantly as a homodimer but also exits as monomer.

It is found in the cytoplasm. It carries out the reaction 17beta-estradiol + NAD(+) = estrone + NADH + H(+). The catalysed reaction is 17beta-estradiol + NADP(+) = estrone + NADPH + H(+). The enzyme catalyses testosterone + NADP(+) = androst-4-ene-3,17-dione + NADPH + H(+). It participates in steroid biosynthesis; estrogen biosynthesis. Its function is as follows. Favors the reduction of estrogens and androgens. Converts estrone (E1) to a more potent estrogen, 17beta-estradiol (E2). Also has 20-alpha-HSD activity. Uses preferentially NADH. This Mus musculus (Mouse) protein is 17-beta-hydroxysteroid dehydrogenase type 1.